The following is a 472-amino-acid chain: Cell division protein FtsP (472 aa).

The segment at residues Met-1–Ala-27 is a signal peptide (tat-type signal).

Belongs to the FtsP family. In terms of processing, predicted to be exported by the Tat system. The position of the signal peptide cleavage has not been experimentally proven.

Its subcellular location is the periplasm. Functionally, cell division protein that is required for growth during stress conditions. May be involved in protecting or stabilizing the divisomal assembly under conditions of stress. This Dickeya dadantii (strain 3937) (Erwinia chrysanthemi (strain 3937)) protein is Cell division protein FtsP.